The following is a 470-amino-acid chain: MSNHEKMSTTDLMENLREELTCFICLDYFSSPVTTECGHSFCLMCLLKSWEEHNTPLSCPECWRTLGAPHFQANERLGRLANIGRQLRSQVLQSEDEQSICGRMPGPSWVFSDDEQSVINVSPPSQGTNKACFSSEAEEQHKEKLQDIINILRKKKKEVQAILNHEKERVMLCKEETKTCKQVVVSEYMKMHQFLKEEEQLQLQLLEREEKANMKKLRENEIQLTQQIRRLGKMIGRIESTCQNLTLESFEEVKGAMDRYESLLFQSPETTITELSLCHITGMREMLRKFSTDITLDPATANAYLLLSEDLKSVRYGGTRQQLPDNPERFDQSATVLGAQIFTCGRHYWEVEVGKKTEWEVGICKDSVNRKGNLPKPPGDLFSLIGLKIGDDYSLWVSSPLKGQHVREPVHKVGVFLDYDSGHIAFYNATDESLIYSFPPTPFHEALRPIFSPCLPNEGTNTDPLIICHI.

The segment at 22–63 adopts an RING-type zinc-finger fold; sequence CFICLDYFSSPVTTECGHSFCLMCLLKSWEEHNTPLSCPECW. Coiled coils occupy residues 135–170 and 196–235; these read SEAE…KERV and KEEE…GKMI. Residues 273 to 470 form the B30.2/SPRY domain; the sequence is TELSLCHITG…NTDPLIICHI (198 aa).

Interacts with USP5. Testis.

The catalysed reaction is S-ubiquitinyl-[E2 ubiquitin-conjugating enzyme]-L-cysteine + [acceptor protein]-L-lysine = [E2 ubiquitin-conjugating enzyme]-L-cysteine + N(6)-ubiquitinyl-[acceptor protein]-L-lysine.. Its pathway is protein modification; protein ubiquitination. Its function is as follows. Probable E3 ubiquitin-protein ligase which plays an important role in blastocyst development. Involved in progression of blastocyst stage and subsequent embryo development. In Mus musculus (Mouse), this protein is Probable E3 ubiquitin-protein ligase TRIML1 (Triml1).